The primary structure comprises 386 residues: MSKNYLFTSESVSEGHPDKLADQISDAILDEILKQDKNARVACETLVKTGMALVAGEITTSAWVDIEELVRNVITETGYDNASKGIDGRTCSVINAIGKQSRDIAQGVDRGSLEDLGAGDQGLMFGFATNETPTLMPSAIYYSHLLMRKQAELRKSGKLAWLRPDAKAQVTLAYENDKPKFIDTIVLSTQHNESISQKELHDAVIEEIVKKVIPNELITKDTKYHINPTGVFLIGGPQGDCGLTGRKIIVDTYGGAAHHGGGAFSGKDPSKVDRSGAYMGRYIAKNIVAAGLADKCEVQVAYAIGVAKPVSLMVNTFGTGKITDNQIEKLVAEVFDLRVGKIIENLDLLRPIYRKTSNYGHFGRELPEFTWEKIDKADILKSAARI.

His16 is a binding site for ATP. Asp18 contacts Mg(2+). Glu44 contacts K(+). L-methionine contacts are provided by Glu57 and Gln100. Positions 100–110 (QSRDIAQGVDR) are flexible loop. Residues 165-167 (DAK), Asp240, 246-247 (RK), Ala263, and Lys267 contribute to the ATP site. Asp240 provides a ligand contact to L-methionine. Lys271 lines the L-methionine pocket.

Belongs to the AdoMet synthase family. In terms of assembly, homotetramer; dimer of dimers. Requires Mg(2+) as cofactor. It depends on K(+) as a cofactor.

It localises to the cytoplasm. The enzyme catalyses L-methionine + ATP + H2O = S-adenosyl-L-methionine + phosphate + diphosphate. The protein operates within amino-acid biosynthesis; S-adenosyl-L-methionine biosynthesis; S-adenosyl-L-methionine from L-methionine: step 1/1. Functionally, catalyzes the formation of S-adenosylmethionine (AdoMet) from methionine and ATP. The overall synthetic reaction is composed of two sequential steps, AdoMet formation and the subsequent tripolyphosphate hydrolysis which occurs prior to release of AdoMet from the enzyme. This is S-adenosylmethionine synthase from Francisella tularensis subsp. holarctica (strain FTNF002-00 / FTA).